We begin with the raw amino-acid sequence, 175 residues long: Large ribosomal subunit protein uL10 (175 aa).

Belongs to the universal ribosomal protein uL10 family. As to quaternary structure, part of the ribosomal stalk of the 50S ribosomal subunit. The N-terminus interacts with L11 and the large rRNA to form the base of the stalk. The C-terminus forms an elongated spine to which L12 dimers bind in a sequential fashion forming a multimeric L10(L12)X complex.

In terms of biological role, forms part of the ribosomal stalk, playing a central role in the interaction of the ribosome with GTP-bound translation factors. The chain is Large ribosomal subunit protein uL10 from Synechococcus elongatus (strain ATCC 33912 / PCC 7942 / FACHB-805) (Anacystis nidulans R2).